The sequence spans 641 residues: Homeobox protein ceh-38 (641 aa).

Polar residues-rich tracts occupy residues 1 to 14 (MESSRTAATSTNGT) and 28 to 38 (DPSSTFINNTG). Disordered stretches follow at residues 1-79 (MESS…TSSA) and 129-244 (LHVD…GDRM). Residues 52 to 79 (TISPHPITPSASTSSATSATEEPATSSA) show a composition bias toward low complexity. A compositionally biased stretch (basic and acidic residues) spans 131–140 (VDSRRRESHD). 2 stretches are compositionally biased toward polar residues: residues 167 to 183 (TPTNDRSTDLGSISSLL) and 190 to 204 (NTIGQSPSPRSTFGS). Positions 308 to 394 (NAEIGDDIYI…TRLAILDMKT (87 aa)) form a DNA-binding region, CUT. Disordered regions lie at residues 398–428 (NRASGMSPPTPAQNVRTHRRSTSDHDGPVSK), 485–508 (GGNIDEPTPFQQVKNISPPPVGDT), and 552–641 (FGVS…LAAN). The homeobox DNA-binding region spans 427 to 486 (SKRPRLVFTDIQKRTLQAIFKETQRPSREMQQTIAEHLRLDLSTVANFFMNARRRSRLGG). Residues 571-604 (HEDDEELDELNDSELAYEEDVEIGDEEEEDEEQA) show a composition bias toward acidic residues. Basic and acidic residues predominate over residues 613 to 626 (KVEELEEKTVIKEE).

It belongs to the CUT homeobox family. Expressed in the embryo. After gastrulation, expressed in almost all cells. During larval and adult stages, expressed in the dorsal and ventral nerve cord, head and tail neurons, pharynx, gut and head.

Its subcellular location is the nucleus. Probable DNA-binding regulatory protein involved in cell-fate specification. In Caenorhabditis elegans, this protein is Homeobox protein ceh-38 (ceh-38).